Reading from the N-terminus, the 79-residue chain is RNA-binding protein Hfq (79 aa).

In terms of domain architecture, Sm spans Asp10–Ile70.

It belongs to the Hfq family. As to quaternary structure, homohexamer.

Functionally, RNA chaperone that binds small regulatory RNA (sRNAs) and mRNAs to facilitate mRNA translational regulation in response to envelope stress, environmental stress and changes in metabolite concentrations. Also binds with high specificity to tRNAs. The sequence is that of RNA-binding protein Hfq from Bartonella bacilliformis (strain ATCC 35685 / KC583 / Herrer 020/F12,63).